Consider the following 310-residue polypeptide: HTH-type transcriptional regulator CbbR (310 aa).

Positions 7 to 64 constitute an HTH lysR-type domain; that stretch reads ITLKQLRALVAVAGSASLTGGATRLGLTPPAIHSQIRNLEEAFGVPLLHRPPETGSFT. The H-T-H motif DNA-binding region spans 24 to 43; the sequence is LTGGATRLGLTPPAIHSQIR.

It belongs to the LysR transcriptional regulatory family.

In terms of biological role, transcriptional activator for the cbb operon for RuBisCO and other Calvin cycle genes. The protein is HTH-type transcriptional regulator CbbR (cbbR) of Cereibacter sphaeroides (Rhodobacter sphaeroides).